Reading from the N-terminus, the 186-residue chain is MNTIRNSICLTIITMVLCGFLFPLAITLIGQIFFYQQANGSLITYDNRIVGSKLIGQHWTDTRYFHGRPSAVDYNMNPEKLYKNGVSSGGSNESNGNTELIARVKHHVKFGNSNVTIDAATSSGSGLDPHITVENALKQAPRIADARHISTSRVTDLIQHRMQRGVLTNDYVNVLELNIALDKMKY.

Residues 10–30 (LTIITMVLCGFLFPLAITLIG) form a helical membrane-spanning segment.

It belongs to the KdpC family. As to quaternary structure, the system is composed of three essential subunits: KdpA, KdpB and KdpC.

Its subcellular location is the cell membrane. Its function is as follows. Part of the high-affinity ATP-driven potassium transport (or Kdp) system, which catalyzes the hydrolysis of ATP coupled with the electrogenic transport of potassium into the cytoplasm. This subunit acts as a catalytic chaperone that increases the ATP-binding affinity of the ATP-hydrolyzing subunit KdpB by the formation of a transient KdpB/KdpC/ATP ternary complex. The polypeptide is Potassium-transporting ATPase KdpC subunit (Staphylococcus aureus (strain bovine RF122 / ET3-1)).